Here is a 416-residue protein sequence, read N- to C-terminus: tRNA(Met) cytidine acetate ligase (416 aa).

ATP is bound by residues 7 to 20 (VVEYNPFHNGHLYH), Gly-101, Asn-163, and Arg-188.

This sequence belongs to the TmcAL family.

The protein localises to the cytoplasm. The enzyme catalyses cytidine(34) in elongator tRNA(Met) + acetate + ATP = N(4)-acetylcytidine(34) in elongator tRNA(Met) + AMP + diphosphate. Catalyzes the formation of N(4)-acetylcytidine (ac(4)C) at the wobble position of elongator tRNA(Met), using acetate and ATP as substrates. First activates an acetate ion to form acetyladenylate (Ac-AMP) and then transfers the acetyl group to tRNA to form ac(4)C34. The sequence is that of tRNA(Met) cytidine acetate ligase from Bacillus licheniformis (strain ATCC 14580 / DSM 13 / JCM 2505 / CCUG 7422 / NBRC 12200 / NCIMB 9375 / NCTC 10341 / NRRL NRS-1264 / Gibson 46).